Consider the following 105-residue polypeptide: Large ribosomal subunit protein uL24 (105 aa).

Belongs to the universal ribosomal protein uL24 family. As to quaternary structure, part of the 50S ribosomal subunit.

In terms of biological role, one of two assembly initiator proteins, it binds directly to the 5'-end of the 23S rRNA, where it nucleates assembly of the 50S subunit. Functionally, one of the proteins that surrounds the polypeptide exit tunnel on the outside of the subunit. The chain is Large ribosomal subunit protein uL24 from Staphylococcus aureus (strain Mu3 / ATCC 700698).